Consider the following 163-residue polypeptide: tRNA-acetylating toxin 2 (163 aa).

The active site involves Tyr-137.

This sequence belongs to the acetyltransferase family. GNAT subfamily. In terms of assembly, homodimer. Forms a complex with cognate antitoxin TacA2.

It carries out the reaction glycyl-tRNA(Gly) + acetyl-CoA = N-acetylglycyl-tRNA(Gly) + CoA + H(+). The enzyme catalyses L-isoleucyl-tRNA(Ile) + acetyl-CoA = N-acetyl-L-isoleucyl-tRNA(Ile) + CoA + H(+). It catalyses the reaction L-leucyl-tRNA(Leu) + acetyl-CoA = N-acetyl-L-leucyl-tRNA(Leu) + CoA + H(+). Functionally, toxic component of a type II toxin-antitoxin (TA) system. Acetylates tRNA and inhibits translation. Acetylates mainly Gly and Ile/Leu in vitro. Overexpression during the lag phase of a tacA2-tacT2 deletion strain leads to a 100-fold increase in persister cells in the presence of cefotaxime and a non-growth state in the absence of antibiotic. This protein, which has a single amino acid compared to S.typhimurium strain 14028s (Lys-29 is Glu in 14028s), produces 100-fold more persister cells, has much higher acetylation activity and binds tRNA much better. Persister cell formation and the growth defect are neutralized by cognate antitoxin TacA2. Its function is as follows. The TacA2-TacT2 complex both represses and derepresses expression of its own operon. The polypeptide is tRNA-acetylating toxin 2 (Salmonella enteritidis).